A 293-amino-acid chain; its full sequence is Putative ribose uptake protein RbsU (293 aa).

10 helical membrane passes run 5 to 24, 34 to 51, 58 to 80, 95 to 114, 121 to 138, 153 to 170, 177 to 199, 212 to 234, 241 to 263, and 273 to 292; these read ALLI…TVAS, IIGA…LAVV, TGTN…IITF, TTAF…LGNW, IIGF…RMTV, RAVV…LYSA, IDGL…IYGF, ITWL…LISA, LATG…IYFL, and VITI…TVFI.

This sequence belongs to the GRP transporter (TC 2.A.7.5) family.

The protein resides in the cell membrane. Functionally, could be involved in the uptake of ribose. This chain is Putative ribose uptake protein RbsU (rbsU), found in Staphylococcus aureus (strain COL).